Reading from the N-terminus, the 413-residue chain is Aspartate aminotransferase, cytoplasmic (413 aa).

Positions 39 and 141 each coordinate L-aspartate. A Phosphoserine modification is found at S149. L-aspartate is bound at residue N195. Position 259 is an N6-(pyridoxal phosphate)lysine (K259). R387 lines the L-aspartate pocket.

It belongs to the class-I pyridoxal-phosphate-dependent aminotransferase family. In terms of assembly, homodimer. The cofactor is pyridoxal 5'-phosphate.

The protein localises to the cytoplasm. The catalysed reaction is L-aspartate + 2-oxoglutarate = oxaloacetate + L-glutamate. It catalyses the reaction L-cysteine + 2-oxoglutarate = 2-oxo-3-sulfanylpropanoate + L-glutamate. The enzyme catalyses (2S)-2-aminobutanoate + 2-oxoglutarate = 2-oxobutanoate + L-glutamate. It carries out the reaction 3-sulfino-L-alanine + 2-oxoglutarate = 3-sulfinopyruvate + L-glutamate. Biosynthesis of L-glutamate from L-aspartate or L-cysteine. Important regulator of levels of glutamate, the major excitatory neurotransmitter of the vertebrate central nervous system. Acts as a scavenger of glutamate in brain neuroprotection. The aspartate aminotransferase activity is involved in hepatic glucose synthesis during development and in adipocyte glyceroneogenesis. Using L-cysteine as substrate, regulates levels of mercaptopyruvate, an important source of hydrogen sulfide. Mercaptopyruvate is converted into H(2)S via the action of 3-mercaptopyruvate sulfurtransferase (3MST). Hydrogen sulfide is an important synaptic modulator and neuroprotectant in the brain. In addition, catalyzes (2S)-2-aminobutanoate, a by-product in the cysteine biosynthesis pathway. The protein is Aspartate aminotransferase, cytoplasmic of Homo sapiens (Human).